We begin with the raw amino-acid sequence, 173 residues long: Dual-action ribosomal maturation protein DarP (173 aa).

This sequence belongs to the DarP family.

Its subcellular location is the cytoplasm. In terms of biological role, member of a network of 50S ribosomal subunit biogenesis factors which assembles along the 30S-50S interface, preventing incorrect 23S rRNA structures from forming. Promotes peptidyl transferase center (PTC) maturation. This is Dual-action ribosomal maturation protein DarP from Pseudomonas syringae pv. tomato (strain ATCC BAA-871 / DC3000).